The chain runs to 422 residues: Methylaspartate ammonia-lyase (422 aa).

Glutamine 175 lines the (2S,3S)-3-methyl-L-aspartate pocket. 3 residues coordinate Mg(2+): aspartate 239, glutamate 276, and aspartate 310. Residue glutamine 332 coordinates (2S,3S)-3-methyl-L-aspartate. Lysine 334 functions as the Proton acceptor in the catalytic mechanism. 363–364 (TC) is a binding site for (2S,3S)-3-methyl-L-aspartate.

The protein belongs to the methylaspartate ammonia-lyase family. In terms of assembly, homodimer. It depends on Mg(2+) as a cofactor.

It catalyses the reaction (2S,3S)-3-methyl-L-aspartate = mesaconate + NH4(+). It participates in amino-acid degradation; L-glutamate degradation via mesaconate pathway; acetate and pyruvate from L-glutamate: step 2/4. In terms of biological role, involved in the methylaspartate cycle. Catalyzes the formation of the alpha,beta-unsaturated bond by the reversible anti elimination of ammonia from L-threo-beta-methylaspartate (L-threo-(2S,3S)-3-methylaspartate) to give mesaconate. The protein is Methylaspartate ammonia-lyase (mal) of Haloarcula marismortui (strain ATCC 43049 / DSM 3752 / JCM 8966 / VKM B-1809) (Halobacterium marismortui).